A 186-amino-acid polypeptide reads, in one-letter code: Peptidyl-tRNA hydrolase (186 aa).

Catalysis depends on His-19, which acts as the Proton acceptor. 3 residues coordinate tRNA: Phe-64, Asn-66, and Asn-112.

This sequence belongs to the PTH family. Monomer.

Its subcellular location is the cytoplasm. The enzyme catalyses an N-acyl-L-alpha-aminoacyl-tRNA + H2O = an N-acyl-L-amino acid + a tRNA + H(+). Functionally, hydrolyzes ribosome-free peptidyl-tRNAs (with 1 or more amino acids incorporated), which drop off the ribosome during protein synthesis, or as a result of ribosome stalling. In terms of biological role, catalyzes the release of premature peptidyl moieties from peptidyl-tRNA molecules trapped in stalled 50S ribosomal subunits, and thus maintains levels of free tRNAs and 50S ribosomes. This chain is Peptidyl-tRNA hydrolase, found in Pelagibacter ubique (strain HTCC1062).